Here is a 397-residue protein sequence, read N- to C-terminus: Acetate kinase (397 aa).

N7 contributes to the Mg(2+) binding site. Position 14 (K14) interacts with ATP. Residue R91 coordinates substrate. The Proton donor/acceptor role is filled by D147. ATP is bound by residues 207–211 (HLGNG), 282–284 (DFR), and 330–334 (GLGEN). E383 is a binding site for Mg(2+).

This sequence belongs to the acetokinase family. As to quaternary structure, homodimer. Requires Mg(2+) as cofactor. The cofactor is Mn(2+).

It localises to the cytoplasm. It carries out the reaction acetate + ATP = acetyl phosphate + ADP. The protein operates within metabolic intermediate biosynthesis; acetyl-CoA biosynthesis; acetyl-CoA from acetate: step 1/2. Its function is as follows. Catalyzes the formation of acetyl phosphate from acetate and ATP. Can also catalyze the reverse reaction. This is Acetate kinase from Moorella thermoacetica (strain ATCC 39073 / JCM 9320).